The sequence spans 392 residues: tRNA(Met) cytidine acetate ligase (392 aa).

ATP is bound by residues 7-20 (VVEY…HQLH), glycine 101, asparagine 162, and 187-188 (RI).

The protein belongs to the TmcAL family.

It localises to the cytoplasm. The enzyme catalyses cytidine(34) in elongator tRNA(Met) + acetate + ATP = N(4)-acetylcytidine(34) in elongator tRNA(Met) + AMP + diphosphate. Functionally, catalyzes the formation of N(4)-acetylcytidine (ac(4)C) at the wobble position of elongator tRNA(Met), using acetate and ATP as substrates. First activates an acetate ion to form acetyladenylate (Ac-AMP) and then transfers the acetyl group to tRNA to form ac(4)C34. The polypeptide is tRNA(Met) cytidine acetate ligase (Listeria welshimeri serovar 6b (strain ATCC 35897 / DSM 20650 / CCUG 15529 / CIP 8149 / NCTC 11857 / SLCC 5334 / V8)).